Here is a 347-residue protein sequence, read N- to C-terminus: Very-long-chain 3-oxoacyl-CoA reductase (347 aa).

The chain crosses the membrane as a helical span at residues 20 to 40 (LLWVVFGLGVLKCTTLSLRFL). NADP(+) contacts are provided by Asp-120, Asn-147, Tyr-223, Lys-227, Val-256, and Ser-258. The active-site Proton donor is the Tyr-223. Lys-227 functions as the Lowers pKa of active site Tyr in the catalytic mechanism.

The protein belongs to the short-chain dehydrogenases/reductases (SDR) family. In terms of assembly, interacts with the fatty acid elongation system components ELO3 and TSC13.

It localises to the endoplasmic reticulum membrane. It carries out the reaction a very-long-chain (3R)-3-hydroxyacyl-CoA + NADP(+) = a very-long-chain 3-oxoacyl-CoA + NADPH + H(+). The enzyme catalyses 3-oxooctadecanoyl-CoA + NADPH + H(+) = (3R)-hydroxyoctadecanoyl-CoA + NADP(+). The catalysed reaction is 3-oxoeicosanoyl-CoA + NADPH + H(+) = (3R)-hydroxyeicosanoyl-CoA + NADP(+). It catalyses the reaction 3-oxodocosanoyl-CoA + NADPH + H(+) = (3R)-hydroxydocosanoyl-CoA + NADP(+). It carries out the reaction 3-oxotetracosanoyl-CoA + NADPH + H(+) = (3R)-hydroxytetracosanoyl-CoA + NADP(+). The enzyme catalyses 3-oxohexacosanoyl-CoA + NADPH + H(+) = (3R)-hydroxyhexacosanoyl-CoA + NADP(+). Its pathway is lipid metabolism; fatty acid biosynthesis. Component of the microsomal membrane bound fatty acid elongation system, which produces the 26-carbon very long-chain fatty acids (VLCFA) from palmitate. Catalyzes the reduction of the 3-ketoacyl-CoA intermediate that is formed in each cycle of fatty acid elongation. VLCFAs serve as precursors for ceramide and sphingolipids. The polypeptide is Very-long-chain 3-oxoacyl-CoA reductase (IFA38) (Saccharomyces cerevisiae (strain ATCC 204508 / S288c) (Baker's yeast)).